A 256-amino-acid chain; its full sequence is 5'-nucleotidase SurE (256 aa).

Residues Asp-9, Asp-10, Ser-42, and Asn-95 each coordinate a divalent metal cation.

Belongs to the SurE nucleotidase family. A divalent metal cation serves as cofactor.

The protein resides in the cytoplasm. The enzyme catalyses a ribonucleoside 5'-phosphate + H2O = a ribonucleoside + phosphate. Nucleotidase that shows phosphatase activity on nucleoside 5'-monophosphates. The protein is 5'-nucleotidase SurE of Campylobacter curvus (strain 525.92).